A 132-amino-acid polypeptide reads, in one-letter code: Small ribosomal subunit protein uS8 (132 aa).

It belongs to the universal ribosomal protein uS8 family. Part of the 30S ribosomal subunit. Contacts proteins S5 and S12.

In terms of biological role, one of the primary rRNA binding proteins, it binds directly to 16S rRNA central domain where it helps coordinate assembly of the platform of the 30S subunit. This Mycobacterium avium (strain 104) protein is Small ribosomal subunit protein uS8.